Reading from the N-terminus, the 317-residue chain is Acetyl-coenzyme A carboxylase carboxyl transferase subunit alpha (317 aa).

Residues 40–293 form the CoA carboxyltransferase C-terminal domain; the sequence is LEGRVRDAMV…ETVIGDALKE (254 aa).

It belongs to the AccA family. As to quaternary structure, acetyl-CoA carboxylase is a heterohexamer composed of biotin carboxyl carrier protein (AccB), biotin carboxylase (AccC) and two subunits each of ACCase subunit alpha (AccA) and ACCase subunit beta (AccD).

The protein localises to the cytoplasm. It catalyses the reaction N(6)-carboxybiotinyl-L-lysyl-[protein] + acetyl-CoA = N(6)-biotinyl-L-lysyl-[protein] + malonyl-CoA. Its pathway is lipid metabolism; malonyl-CoA biosynthesis; malonyl-CoA from acetyl-CoA: step 1/1. Functionally, component of the acetyl coenzyme A carboxylase (ACC) complex. First, biotin carboxylase catalyzes the carboxylation of biotin on its carrier protein (BCCP) and then the CO(2) group is transferred by the carboxyltransferase to acetyl-CoA to form malonyl-CoA. This chain is Acetyl-coenzyme A carboxylase carboxyl transferase subunit alpha, found in Rhizobium meliloti (strain 1021) (Ensifer meliloti).